The primary structure comprises 391 residues: Succinate--CoA ligase [ADP-forming] subunit beta (391 aa).

An ATP-grasp domain is found at 9 to 245; that stretch reads KQIFAKYGVP…ISEEDADERE (237 aa). ATP-binding positions include K46, 53 to 55, E99, A102, and E107; that span reads GRG. Mg(2+) contacts are provided by N200 and D214. Substrate contacts are provided by residues N265 and 322-324; that span reads GIV.

It belongs to the succinate/malate CoA ligase beta subunit family. As to quaternary structure, heterotetramer of two alpha and two beta subunits. It depends on Mg(2+) as a cofactor.

The enzyme catalyses succinate + ATP + CoA = succinyl-CoA + ADP + phosphate. It catalyses the reaction GTP + succinate + CoA = succinyl-CoA + GDP + phosphate. The protein operates within carbohydrate metabolism; tricarboxylic acid cycle; succinate from succinyl-CoA (ligase route): step 1/1. Its function is as follows. Succinyl-CoA synthetase functions in the citric acid cycle (TCA), coupling the hydrolysis of succinyl-CoA to the synthesis of either ATP or GTP and thus represents the only step of substrate-level phosphorylation in the TCA. The beta subunit provides nucleotide specificity of the enzyme and binds the substrate succinate, while the binding sites for coenzyme A and phosphate are found in the alpha subunit. In Sulfurimonas denitrificans (strain ATCC 33889 / DSM 1251) (Thiomicrospira denitrificans (strain ATCC 33889 / DSM 1251)), this protein is Succinate--CoA ligase [ADP-forming] subunit beta.